The primary structure comprises 258 residues: Leucyl/phenylalanyl-tRNA--protein transferase (258 aa).

The interval 199-220 (GGSDGPAPDQSIGMSSSGGVSD) is disordered. Low complexity predominate over residues 209-220 (SIGMSSSGGVSD).

This sequence belongs to the L/F-transferase family.

The protein localises to the cytoplasm. The enzyme catalyses N-terminal L-lysyl-[protein] + L-leucyl-tRNA(Leu) = N-terminal L-leucyl-L-lysyl-[protein] + tRNA(Leu) + H(+). The catalysed reaction is N-terminal L-arginyl-[protein] + L-leucyl-tRNA(Leu) = N-terminal L-leucyl-L-arginyl-[protein] + tRNA(Leu) + H(+). It catalyses the reaction L-phenylalanyl-tRNA(Phe) + an N-terminal L-alpha-aminoacyl-[protein] = an N-terminal L-phenylalanyl-L-alpha-aminoacyl-[protein] + tRNA(Phe). In terms of biological role, functions in the N-end rule pathway of protein degradation where it conjugates Leu, Phe and, less efficiently, Met from aminoacyl-tRNAs to the N-termini of proteins containing an N-terminal arginine or lysine. This chain is Leucyl/phenylalanyl-tRNA--protein transferase, found in Hyphomonas neptunium (strain ATCC 15444).